Here is a 320-residue protein sequence, read N- to C-terminus: Phospho-N-acetylmuramoyl-pentapeptide-transferase (320 aa).

10 helical membrane passes run 6 to 26, 54 to 74, 81 to 101, 117 to 137, 145 to 165, 175 to 195, 200 to 220, 226 to 246, 251 to 271, and 300 to 320; these read FLTPLMSGFVITVIFMPLFIG, MGGLVFIVAAVISSIWVAIWL, LWIALFILVLYGLLGFSDDFI, LAGQILGGAVFLAVYFHEGFS, IGTISSSWFFSLFVIVWLVGF, IDGLVAGLAIVSFATYTIIAF, IDVAIFGLTIIGGLIGFLIFN, IFMGDVGSLALGGALAAMSIL, FSLLLIGLVYVIETASVMLQV, and RIDISFWVFSIICSAIYLLIF.

It belongs to the glycosyltransferase 4 family. MraY subfamily. The cofactor is Mg(2+).

The protein localises to the cell membrane. The catalysed reaction is UDP-N-acetyl-alpha-D-muramoyl-L-alanyl-gamma-D-glutamyl-L-lysyl-D-alanyl-D-alanine + di-trans,octa-cis-undecaprenyl phosphate = Mur2Ac(oyl-L-Ala-gamma-D-Glu-L-Lys-D-Ala-D-Ala)-di-trans,octa-cis-undecaprenyl diphosphate + UMP. The protein operates within cell wall biogenesis; peptidoglycan biosynthesis. Its function is as follows. Catalyzes the initial step of the lipid cycle reactions in the biosynthesis of the cell wall peptidoglycan: transfers peptidoglycan precursor phospho-MurNAc-pentapeptide from UDP-MurNAc-pentapeptide onto the lipid carrier undecaprenyl phosphate, yielding undecaprenyl-pyrophosphoryl-MurNAc-pentapeptide, known as lipid I. The polypeptide is Phospho-N-acetylmuramoyl-pentapeptide-transferase (Latilactobacillus sakei subsp. sakei (strain 23K) (Lactobacillus sakei subsp. sakei)).